Consider the following 373-residue polypeptide: AA9 family lytic polysaccharide monooxygenase A (373 aa).

An N-terminal signal peptide occupies residues 1–20 (MKSSTFGMLALAAAAKLVSA). H21 lines the Cu(2+) pocket. The disordered stretch occupies residues 36 to 55 (EGNSQSGYIRSPPSNSPITD). C63 and C183 are joined by a disulfide. Cu(2+) is bound at residue H102. H169 and Q178 together coordinate O2. Y180 serves as a coordination point for Cu(2+). Residues 234 to 333 (GASGSSSSSS…NSVPQPSSNA (100 aa)) are disordered. 2 stretches are compositionally biased toward low complexity: residues 235–262 (ASGSSSSSSSSASASAPAPTSAAPAPSS) and 270–323 (PATS…AAPT). The span at 324–333 (NSVPQPSSNA) shows a compositional bias: polar residues. The 37-residue stretch at 335–371 (GAVKEWYQCGGLNYSGSTQCEEGLTCKKWNPYYHQCV) folds into the CBM1 domain. An N-linked (GlcNAc...) asparagine glycan is attached at N347.

It belongs to the polysaccharide monooxygenase AA9 family. It depends on Cu(2+) as a cofactor.

The protein resides in the secreted. It carries out the reaction [(1-&gt;4)-beta-D-glucosyl]n+m + reduced acceptor + O2 = 4-dehydro-beta-D-glucosyl-[(1-&gt;4)-beta-D-glucosyl]n-1 + [(1-&gt;4)-beta-D-glucosyl]m + acceptor + H2O.. In terms of biological role, lytic polysaccharide monooxygenase (LPMO) that depolymerizes crystalline and amorphous polysaccharides via the oxidation of scissile alpha- or beta-(1-4)-glycosidic bonds, yielding exclusively C4 oxidation products. Catalysis by LPMOs requires the reduction of the active-site copper from Cu(II) to Cu(I) by a reducing agent and H(2)O(2) or O(2) as a cosubstrate. In addition to cellulose, also cleaves the beta-(1!4)-glucan backbone of tamarind xyloglucan, but only next to unsubstituted glucosyl units. The sequence is that of AA9 family lytic polysaccharide monooxygenase A from Aspergillus tamarii.